Here is a 441-residue protein sequence, read N- to C-terminus: Glutamate--tRNA ligase 2 (441 aa).

The short motif at 6–16 (PSPTGDMHIGN) is the 'HIGH' region element. Positions 231–235 (KMSKR) match the 'KMSKS' region motif. ATP is bound at residue Lys234.

Belongs to the class-I aminoacyl-tRNA synthetase family. Glutamate--tRNA ligase type 1 subfamily. Monomer.

Its subcellular location is the cytoplasm. It catalyses the reaction tRNA(Glu) + L-glutamate + ATP = L-glutamyl-tRNA(Glu) + AMP + diphosphate. In terms of biological role, catalyzes the attachment of glutamate to tRNA(Glu) in a two-step reaction: glutamate is first activated by ATP to form Glu-AMP and then transferred to the acceptor end of tRNA(Glu). The chain is Glutamate--tRNA ligase 2 from Helicobacter hepaticus (strain ATCC 51449 / 3B1).